The primary structure comprises 501 residues: L-arabinose isomerase (501 aa).

The Mn(2+) site is built by E306, E333, H350, and H450.

It belongs to the arabinose isomerase family. As to quaternary structure, homohexamer. It depends on Mn(2+) as a cofactor.

It catalyses the reaction beta-L-arabinopyranose = L-ribulose. The protein operates within carbohydrate degradation; L-arabinose degradation via L-ribulose; D-xylulose 5-phosphate from L-arabinose (bacterial route): step 1/3. Functionally, catalyzes the conversion of L-arabinose to L-ribulose. The sequence is that of L-arabinose isomerase from Pectobacterium carotovorum subsp. carotovorum (strain PC1).